The chain runs to 826 residues: Zinc phosphodiesterase ELAC protein 2 (826 aa).

Residues 1–16 (MWALCSLLRSAAGRTM) constitute a mitochondrion transit peptide. Disordered regions lie at residues 16-51 (MSQGRTISQAPARRERPRKDPLRHLRTREKRGPSGC) and 188-231 (EQRR…VSQR). Residues 27 to 38 (ARRERPRKDPLR) show a composition bias toward basic and acidic residues. Phosphoserine occurs at positions 199, 208, 212, 229, 618, and 736. Residues 208–224 (SPERSSDSESNENEPHL) are compositionally biased toward basic and acidic residues. The disordered stretch occupies residues 798–826 (ELAGGLEDGEPQQKRAHTEEPQAKKVRAQ). The segment covering 808-820 (PQQKRAHTEEPQA) has biased composition (basic and acidic residues).

Belongs to the RNase Z family. As to quaternary structure, homodimer. Interacts with PTCD1. Zn(2+) serves as cofactor. In terms of tissue distribution, widely expressed. Highly expressed in heart, placenta, liver, skeletal muscle, kidney, pancreas, testis and ovary. Weakly expressed in brain, lung, spleen, thymus, prostate, small intestine, colon and leukocytes.

It localises to the mitochondrion. Its subcellular location is the mitochondrion matrix. It is found in the mitochondrion nucleoid. The protein resides in the nucleus. The enzyme catalyses Endonucleolytic cleavage of RNA, removing extra 3' nucleotides from tRNA precursor, generating 3' termini of tRNAs. A 3'-hydroxy group is left at the tRNA terminus and a 5'-phosphoryl group is left at the trailer molecule.. Zinc phosphodiesterase, which displays mitochondrial tRNA 3'-processing endonuclease activity. Involved in tRNA maturation, by removing a 3'-trailer from precursor tRNA. Associates with mitochondrial DNA complexes at the nucleoids to initiate RNA processing and ribosome assembly. The sequence is that of Zinc phosphodiesterase ELAC protein 2 (ELAC2) from Homo sapiens (Human).